We begin with the raw amino-acid sequence, 103 residues long: MLGSAGTLLLLLLAWGARALSQPDDNRITTGRNQDLNAIQQDLLLKLLSGWTDSRESNLVEVERNVPDPPEPKIPPSVKFPRLSLRERKAPCKNFFWKTFTMC.

The first 21 residues, 1–21, serve as a signal peptide directing secretion; that stretch reads MLGSAGTLLLLLLAWGARALS. A propeptide spanning residues 22-87 is cleaved from the precursor; that stretch reads QPDDNRITTG…VKFPRLSLRE (66 aa). An intrachain disulfide couples Cys-92 to Cys-103.

This sequence belongs to the somatostatin family.

The protein resides in the secreted. Somatostatin inhibits the release of somatotropin. In Pelophylax ridibundus (Marsh frog), this protein is Somatostatin-2 (sst2).